Consider the following 201-residue polypeptide: Small ribosomal subunit protein uS4c (201 aa).

The span at 1–14 shows a compositional bias: basic residues; sequence MSRYRGPRFKKIRR. A disordered region spans residues 1–44; it reads MSRYRGPRFKKIRRLGALPGLTSKRPRAGSDPRNQSRSGKKSQY. Positions 89–152 constitute an S4 RNA-binding domain; sequence MRLDNTLFRL…NSRTLVQNLL (64 aa).

This sequence belongs to the universal ribosomal protein uS4 family. Part of the 30S ribosomal subunit. Contacts protein S5. The interaction surface between S4 and S5 is involved in control of translational fidelity.

It localises to the plastid. The protein resides in the chloroplast. Functionally, one of the primary rRNA binding proteins, it binds directly to 16S rRNA where it nucleates assembly of the body of the 30S subunit. In terms of biological role, with S5 and S12 plays an important role in translational accuracy. This is Small ribosomal subunit protein uS4c (rps4) from Draba nemorosa (Woodland whitlowgrass).